Here is a 458-residue protein sequence, read N- to C-terminus: Divalent metal cation transporter MntH (458 aa).

A run of 11 helical transmembrane segments spans residues 38-58, 76-96, 119-139, 151-171, 180-200, 223-243, 275-295, 315-335, 370-390, 393-413, and 437-457; these read GFWK…VGYM, SLLS…AMAA, GGFL…AEII, MPLI…LLLM, AVVA…VILA, MLYL…LFLG, LTMA…LFFG, IVGA…LLAS, LMSV…EAKI, LLTF…IPLV, and FISG…LGFV.

Belongs to the NRAMP family.

It is found in the cell membrane. Functionally, h(+)-stimulated, divalent metal cation uptake system. In Lacticaseibacillus paracasei (strain ATCC 334 / BCRC 17002 / CCUG 31169 / CIP 107868 / KCTC 3260 / NRRL B-441) (Lactobacillus paracasei), this protein is Divalent metal cation transporter MntH.